A 615-amino-acid polypeptide reads, in one-letter code: Semenogelin-1 (615 aa).

The first 23 residues, 1-23 (MKPIIFLVLSLLLILEKQAAVMG), serve as a signal peptide directing secretion. Gln24 is subject to Pyrrolidone carboxylic acid. Disordered stretches follow at residues 24–118 (QKGG…EHGK), 133–160 (GHAPHGTQNPSQDQGNSTSGKGISSQDS), and 172–585 (GKEQ…HRSY). Residues 34-46 (SESSQFPHGQKGQ) are compositionally biased toward polar residues. Positions 50 to 80 (ARKDKQHAESKRSVSIEHTYHVDIPDHDQTR) are enriched in basic and acidic residues. Over residues 81–91 (TSKQYDLNAQN) the composition is skewed to polar residues. Basic and acidic residues predominate over residues 107 to 118 (FNHKQEGREHGK). Polar residues-rich tracts occupy residues 138–160 (GTQNPSQDQGNSTSGKGISSQDS), 177–196 (SVSGTQRNGTQGGSQSSPVL), and 209–224 (TQNSLQNKGSSPNVNE). Residues Asn148, Asn184, and Asn223 are each glycosylated (N-linked (GlcNAc...) asparagine). Residues 241–253 (QEDRLQHGSKDVF) show a composition bias toward basic and acidic residues. A compositionally biased stretch (polar residues) spans 254-265 (SKNQNQTRNPNQ). Asn258 and Asn275 each carry an N-linked (GlcNAc...) asparagine glycan. Basic and acidic residues predominate over residues 283–300 (TEERRPNHGEKGIQKDAS). N-linked (GlcNAc...) asparagine glycosylation is present at Asn306. The segment covering 308-317 (TEDKMHDKSQ) has biased composition (basic and acidic residues). A glycan (N-linked (GlcNAc...) asparagine) is linked at Asn332. A compositionally biased stretch (basic and acidic residues) spans 341 to 358 (TEERRPNHGEKGIQKDAS). The N-linked (GlcNAc...) asparagine glycan is linked to Asn364. A compositionally biased stretch (basic and acidic residues) spans 366–375 (TEDKMHDKSQ). Asn390 is a glycosylation site (N-linked (GlcNAc...) asparagine). Positions 399-416 (TEERRPNHGEKGIQKDAS) are enriched in basic and acidic residues. Residue Asn422 is glycosylated (N-linked (GlcNAc...) asparagine). Residues 424-433 (TEDKMHDKSQ) show a composition bias toward basic and acidic residues. An N-linked (GlcNAc...) asparagine glycan is attached at Asn448. Positions 457 to 474 (TEERRPNHGEKGIQKDAS) are enriched in basic and acidic residues. Residue Asn480 is glycosylated (N-linked (GlcNAc...) asparagine). A compositionally biased stretch (basic and acidic residues) spans 481 to 491 (KTEDKMHDKSQ). Asn506 carries an N-linked (GlcNAc...) asparagine glycan. Over residues 515 to 532 (TEERRPNHGEKGIQKDAS) the composition is skewed to basic and acidic residues. N-linked (GlcNAc...) asparagine glycosylation is present at Asn538. Positions 539–549 (KTEDEKHDKSQ) are enriched in basic and acidic residues. Residues 550 to 563 (KQVTTPSQDQQSGQ) show a composition bias toward polar residues.

It belongs to the semenogelin family. In terms of assembly, occurs in disulfide-linked complexes. Post-translationally, transglutaminase substrate. Rapidly cleaved after ejaculation by KLK3/PSA, resulting in liquefaction of the semen coagulum and the progressive release of motile spermatozoa.

Its subcellular location is the secreted. Predominant protein in semen. It participates in the formation of a gel matrix entrapping the accessory gland secretions and ejaculated spermatozoa. Fragments of semenogelin and/or fragments of the related proteins may contribute to the activation of progressive sperm movements as the gel-forming proteins are fragmented by KLK3/PSA. The protein is Semenogelin-1 (SEMG1) of Saguinus oedipus (Cotton-top tamarin).